A 218-amino-acid polypeptide reads, in one-letter code: Protein-methionine-sulfoxide reductase heme-binding subunit MsrQ (218 aa).

The next 5 helical transmembrane spans lie at 14 to 34 (LVHA…WQVW), 60 to 80 (LLLI…AVVI), 86 to 106 (LGLY…TLDL), 121 to 141 (PYIT…ITST), and 155 to 175 (LHML…WLVK).

This sequence belongs to the MsrQ family. As to quaternary structure, heterodimer of a catalytic subunit (MsrP) and a heme-binding subunit (MsrQ). FMN serves as cofactor. Heme b is required as a cofactor.

It localises to the cell inner membrane. Part of the MsrPQ system that repairs oxidized periplasmic proteins containing methionine sulfoxide residues (Met-O), using respiratory chain electrons. Thus protects these proteins from oxidative-stress damage caused by reactive species of oxygen and chlorine generated by the host defense mechanisms. MsrPQ is essential for the maintenance of envelope integrity under bleach stress, rescuing a wide series of structurally unrelated periplasmic proteins from methionine oxidation. MsrQ provides electrons for reduction to the reductase catalytic subunit MsrP, using the quinone pool of the respiratory chain. The chain is Protein-methionine-sulfoxide reductase heme-binding subunit MsrQ from Xanthomonas axonopodis pv. citri (strain 306).